Reading from the N-terminus, the 84-residue chain is Cell division topological specificity factor (84 aa).

This sequence belongs to the MinE family.

Prevents the cell division inhibition by proteins MinC and MinD at internal division sites while permitting inhibition at polar sites. This ensures cell division at the proper site by restricting the formation of a division septum at the midpoint of the long axis of the cell. This Burkholderia cenocepacia (strain ATCC BAA-245 / DSM 16553 / LMG 16656 / NCTC 13227 / J2315 / CF5610) (Burkholderia cepacia (strain J2315)) protein is Cell division topological specificity factor.